A 649-amino-acid polypeptide reads, in one-letter code: Vitamin K-dependent protein S (649 aa).

The propeptide occupies 1 to 14 (SKQQASQVLVRKRR). The region spanning 15 to 60 (ANSMLEETKQGNLERECIEELCNKEEAREVFENDPETDYFYPKYLV) is the Gla domain. A 4-carboxyglutamate mark is found at E20, E21, E28, E30, E33, E34, E39, E40, E43, E46, and E50. C31 and C36 are disulfide-bonded. The thrombin-sensitive stretch occupies residues 61–89 (CLRSFQSGLFTAARQSTDAYPDLRSCVNA). One can recognise an EGF-like 1 domain in the interval 90–128 (IPDQCSPLPCNEDGYMSCKDGKASFTCTCKPGWQGERCE). 13 disulfides stabilise this stretch: C94-C107, C99-C116, C118-C127, C134-C148, C144-C157, C159-C172, C178-C190, C185-C199, C201-C214, C220-C229, C225-C238, C240-C255, and C422-C448. Residue D109 is modified to (3R)-3-hydroxyaspartate. The EGF-like 2; calcium-binding domain maps to 130 to 173 (DINECKDPSNINGGCSQICDNTPGSYHCSCKSGFVMLSNKKDCK). Residues 174-215 (DVDECSLKPNMCGTAVCKNIPGDFECECPEGYRYNLKSKSCE) form the EGF-like 3; calcium-binding domain. One can recognise an EGF-like 4; calcium-binding domain in the interval 216 to 256 (DVDECSENMCAQLCVNYPGGYTCYCDGKKGFKLAQDQKSCE). Laminin G-like domains follow at residues 272–448 (LLYL…NKHC) and 457–639 (YYPG…AHSC). N-linked (GlcNAc...) asparagine glycans are attached at residues N472, N482, and N503. Residues C612 and C639 are joined by a disulfide bond.

In terms of processing, the iron and 2-oxoglutarate dependent 3-hydroxylation of aspartate and asparagine is (R) stereospecific within EGF domains. As to expression, plasma.

It is found in the secreted. Functionally, anticoagulant plasma protein; it is a cofactor to activated protein C in the degradation of coagulation factors Va and VIIIa. It helps to prevent coagulation and stimulating fibrinolysis. The chain is Vitamin K-dependent protein S (PROS1) from Macaca mulatta (Rhesus macaque).